We begin with the raw amino-acid sequence, 120 residues long: Myohemerythrin (120 aa).

Positions 26, 56, 60, 75, 79, 108, and 113 each coordinate Fe cation.

The protein belongs to the hemerythrin family.

Functionally, myohemerythrin is an oxygen-binding protein found in the retractor muscles of certain worms. The oxygen-binding site contains two iron atoms. The sequence is that of Myohemerythrin from Sipunculus nudus (Sipunculan worm).